A 506-amino-acid chain; its full sequence is L-amino-acid oxidase (506 aa).

An N-terminal signal peptide occupies residues 1 to 18 (MNVFFTFSLLFLAALGSC). Cys-28 and Cys-191 are joined by a disulfide. Glu-36 is a binding site for Zn(2+). Residues 61–62 (MS), Ser-62, 81–82 (EA), Arg-89, and 105–108 (GPMR) contribute to the FAD site. Arg-108 lines the substrate pocket. Residues Glu-111, Glu-118, and Glu-150 each coordinate Zn(2+). Asn-190 carries N-linked (GlcNAc...) asparagine glycosylation. Asp-219 lines the Zn(2+) pocket. Substrate is bound at residue His-241. Glu-248 contributes to the Zn(2+) binding site. Position 279 (Val-279) interacts with FAD. The Zn(2+) site is built by Glu-299 and His-332. Cysteines 349 and 430 form a disulfide. Substrate is bound at residue Tyr-390. His-458 lines the Zn(2+) pocket. FAD is bound by residues Glu-475 and 482-487 (GWIDST). Position 482–483 (482–483 (GW)) interacts with substrate.

It belongs to the flavin monoamine oxidase family. FIG1 subfamily. Homodimer; non-covalently linked. Stabilized by a single zinc-binding site located at the dimer interface (Asp-219, His-332 and His-458). Other zinc-bind sites can be understood as transient and non-specific, and appear due to the high concentration of zinc ions used in the crystallization experiments. It depends on FAD as a cofactor. Expressed by the venom gland.

Its subcellular location is the secreted. The enzyme catalyses an L-alpha-amino acid + O2 + H2O = a 2-oxocarboxylate + H2O2 + NH4(+). The catalysed reaction is L-leucine + O2 + H2O = 4-methyl-2-oxopentanoate + H2O2 + NH4(+). It catalyses the reaction L-phenylalanine + O2 + H2O = 3-phenylpyruvate + H2O2 + NH4(+). It carries out the reaction L-tryptophan + O2 + H2O = indole-3-pyruvate + H2O2 + NH4(+). The enzyme catalyses L-methionine + O2 + H2O = 4-methylsulfanyl-2-oxobutanoate + H2O2 + NH4(+). The catalysed reaction is L-isoleucine + O2 + H2O = (S)-3-methyl-2-oxopentanoate + H2O2 + NH4(+). It catalyses the reaction L-tyrosine + O2 + H2O = 3-(4-hydroxyphenyl)pyruvate + H2O2 + NH4(+). Catalyzes an oxidative deamination of predominantly hydrophobic and aromatic L-amino acids, thus producing hydrogen peroxide that may contribute to the diverse toxic effects of this enzyme. Shows high catalytic activity against L-Met, L-Leu, L-Phe, L-Trp, L-Tyr, L-Ile. Shows no or weak activity on L-Cys, L-Val, L-Gln, L-Thr, L-Ser, L-Lys, L-Arg, L-Asn, L-Glu, L-Gly, L-Pro, L-Asp and L-His. Induces platelet aggregation in platelet-rich plasma, probably due to hydrogen peroxide production, since catalase inhibits aggregation effect. Induces moderate mouse paw edema. Induces apoptosis and shows cytotoxicity against several cancer cell lines, which is inhibited by catalase. Shows hemolytic activity and antibacterial activities against both Gram-positive and Gram-negative bacteria. Has parasiticidal activities against both trypanosomes and leishmania, as a result of enzyme-catalyzed hydrogen peroxide production. Unlike other snake venom L-amino acid oxidases, does not induce hemorrhage (with 50 ug of enzyme). The sequence is that of L-amino-acid oxidase from Bothrops atrox (Barba amarilla).